A 451-amino-acid polypeptide reads, in one-letter code: Tubulin gamma-1 chain (451 aa).

Ser-131 is modified (phosphoserine; by BRSK1). Ala-142–Gly-148 contacts GTP.

Belongs to the tubulin family. Component of the gamma-tubulin ring complex (gTuRC) consisting of TUBGCP2, TUBGCP3, TUBGCP4, TUBGCP5 and TUBGCP6 and gamma-tubulin TUBG1 or TUBG2. TUBGCP2, TUBGCP3, TUBGCP4, TUBGCP5 and TUBGCP6 assemble in a 5:5:2:1:1 stoichiometry; each is associated with a gamma-tubulin, thereby arranging 14 gamma-tubulins in a helical manner. Gamma-tubulin at the first position is blocked by TUBGCP3 at the last position, allowing 13 protafilaments to grow into a microtubule. The gTuRC (via TUBGCP3 and TUBGCP6) interacts with ACTB and MZT1; the interactions form a luminal bridge that stabilizes the initial structure during complex assembly. The gTuRC (via TUBGCP2) interacts with MZT2A/MZT2B and CDK5RAP2 (via CM1 motif); the interactions play a role in gTuRC activation. Interacts with alpha-beta tubulin heterodimers; the interaction allows microtubules to nucleate from the gTuRC. Interacts with B9D2. Interacts with CDK5RAP2; the interaction is leading to centrosomal localization of TUBG1 and CDK5RAP2. Interacts with CIMAP3. Interacts with SAS6 and NUP62 at the centrosome. Interacts with EML3 (phosphorylated at 'Thr-881') and HAUS8. Interacts with DNM2; this interaction may participate in centrosome cohesion. Interacts with CCDC66. Post-translationally, phosphorylation at Ser-131 by BRSK1 regulates centrosome duplication, possibly by mediating relocation of gamma-tubulin and its associated proteins from the cytoplasm to the centrosome.

It is found in the cytoplasm. The protein resides in the cytoskeleton. Its subcellular location is the microtubule organizing center. The protein localises to the centrosome. It localises to the spindle. In terms of biological role, tubulin is the major constituent of microtubules, protein filaments consisting of alpha- and beta-tubulin heterodimers. Gamma-tubulin is a key component of the gamma-tubulin ring complex (gTuRC) which mediates microtubule nucleation. The gTuRC regulates the minus-end nucleation of alpha-beta tubulin heterodimers that grow into microtubule protafilaments, a critical step in centrosome duplication and spindle formation. The protein is Tubulin gamma-1 chain of Mus musculus (Mouse).